The primary structure comprises 228 residues: Probable septum site-determining protein MinC (228 aa).

Belongs to the MinC family. As to quaternary structure, interacts with MinD and FtsZ.

Its function is as follows. Cell division inhibitor that blocks the formation of polar Z ring septums. Rapidly oscillates between the poles of the cell to destabilize FtsZ filaments that have formed before they mature into polar Z rings. Prevents FtsZ polymerization. The polypeptide is Probable septum site-determining protein MinC (Bacillus cereus (strain G9842)).